Reading from the N-terminus, the 266-residue chain is Thiazole synthase (266 aa).

K107 functions as the Schiff-base intermediate with DXP in the catalytic mechanism. 1-deoxy-D-xylulose 5-phosphate-binding positions include G168, A194 to G195, and N216 to T217.

Belongs to the ThiG family. Homotetramer. Forms heterodimers with either ThiH or ThiS.

The protein localises to the cytoplasm. It carries out the reaction [ThiS sulfur-carrier protein]-C-terminal-Gly-aminoethanethioate + 2-iminoacetate + 1-deoxy-D-xylulose 5-phosphate = [ThiS sulfur-carrier protein]-C-terminal Gly-Gly + 2-[(2R,5Z)-2-carboxy-4-methylthiazol-5(2H)-ylidene]ethyl phosphate + 2 H2O + H(+). It functions in the pathway cofactor biosynthesis; thiamine diphosphate biosynthesis. Catalyzes the rearrangement of 1-deoxy-D-xylulose 5-phosphate (DXP) to produce the thiazole phosphate moiety of thiamine. Sulfur is provided by the thiocarboxylate moiety of the carrier protein ThiS. In vitro, sulfur can be provided by H(2)S. The chain is Thiazole synthase from Azorhizobium caulinodans (strain ATCC 43989 / DSM 5975 / JCM 20966 / LMG 6465 / NBRC 14845 / NCIMB 13405 / ORS 571).